The following is a 352-amino-acid chain: Dihydroorotate dehydrogenase (quinone) (352 aa).

FMN contacts are provided by residues 68 to 72 and threonine 92; that span reads AGFDK. Lysine 72 provides a ligand contact to substrate. 117 to 121 serves as a coordination point for substrate; sequence NAMGF. Residues asparagine 146 and asparagine 179 each coordinate FMN. Substrate is bound at residue asparagine 179. The active-site Nucleophile is the serine 182. Asparagine 184 contacts substrate. FMN-binding residues include lysine 215 and threonine 243. Residue 244-245 coordinates substrate; that stretch reads NT. FMN-binding positions include glycine 263, glycine 292, and 313 to 314; that span reads YS.

It belongs to the dihydroorotate dehydrogenase family. Type 2 subfamily. Monomer. FMN serves as cofactor.

The protein resides in the cell membrane. The catalysed reaction is (S)-dihydroorotate + a quinone = orotate + a quinol. The protein operates within pyrimidine metabolism; UMP biosynthesis via de novo pathway; orotate from (S)-dihydroorotate (quinone route): step 1/1. Functionally, catalyzes the conversion of dihydroorotate to orotate with quinone as electron acceptor. This chain is Dihydroorotate dehydrogenase (quinone), found in Sulfurimonas denitrificans (strain ATCC 33889 / DSM 1251) (Thiomicrospira denitrificans (strain ATCC 33889 / DSM 1251)).